A 945-amino-acid polypeptide reads, in one-letter code: MMPLSPQLQQHWQTVADRLPADFPVAELSPQARSVMAFSDFVEQSVIAQPGWLNELADSAPAAEEWRHYEAWLQERLQAVTDEAGLMRELRLFRRQMMVRIAWAQALSLVREEETLQQLSVLAETLIVAARDWLYAACCKEWGTPCNAEGQPQPLLILGMGKLGGGELNFSSDIDLIFAWPEHGATRGGRRELDNAQFFTRLGQRLIKALDQPTQDGFVYRVDMRLRPFGDSGPLVLSFAALEDYYQEQGRDWERYAMVKARIMGDNDGAYASELRAMLRPFVFRRYIDFSVIQSLRNMKGMIAREVRRRGLKDNIKLGAGGIREIEFIVQVFQLIRGGREPALQQRALLPTLAAIDELHLLPEGDATLLRAAYLFLRRLENLLQSINDEQTQTLPQDELNRARLAWGMHTDDWETLSAQLANHMANVRRVFNELIGDDEAQSPDEQLAEYWRELWQDALEEDDASPALAHLNDADRRSVLALIADFRKELDRRTIGPRGRQVLDQLMPHLLSEICSRADAPLPLARITPLLTGIVTRTTYLELLSEFPGALKHLITLCAASPMVASQLARHPLLLDELLDPNTLYQPTATDAYRDELRQYLLRVPEEDEEQQLEALRQFKQAQQLHIAAADIAGTLPVMKVSDHLTWLAEAILDAVVQQAWGQMVARYGLPTHLHDRQGRGFAVVGYGKLGGWELGYSSDLDLVFLHDCPAEVMTDGEREIDGRQFYLRLAQRIMHLFSTRTSSGILYEVDARLRPSGAAGMLVTTADAFADYQQNEAWTWEHQALVRARVVYGDPALQARFDAIRRDILTTPREGATLQTEVREMREKMRAHLGNKHPNRFDIKADAGGITDIEFITQYLVLRYASDKPKLTRWSDNVRILELLAQNDIMDEEEARALTHAYTTLRDALHHLALQELPGHVAPEAFSREREQVSASWQKWLMA.

An adenylyl removase region spans residues 1–440 (MMPLSPQLQQ…VFNELIGDDE (440 aa)). The adenylyl transferase stretch occupies residues 449-945 (AEYWRELWQD…SASWQKWLMA (497 aa)).

This sequence belongs to the GlnE family. Mg(2+) serves as cofactor.

It catalyses the reaction [glutamine synthetase]-O(4)-(5'-adenylyl)-L-tyrosine + phosphate = [glutamine synthetase]-L-tyrosine + ADP. It carries out the reaction [glutamine synthetase]-L-tyrosine + ATP = [glutamine synthetase]-O(4)-(5'-adenylyl)-L-tyrosine + diphosphate. Functionally, involved in the regulation of glutamine synthetase GlnA, a key enzyme in the process to assimilate ammonia. When cellular nitrogen levels are high, the C-terminal adenylyl transferase (AT) inactivates GlnA by covalent transfer of an adenylyl group from ATP to specific tyrosine residue of GlnA, thus reducing its activity. Conversely, when nitrogen levels are low, the N-terminal adenylyl removase (AR) activates GlnA by removing the adenylyl group by phosphorolysis, increasing its activity. The regulatory region of GlnE binds the signal transduction protein PII (GlnB) which indicates the nitrogen status of the cell. This Klebsiella pneumoniae subsp. pneumoniae (strain ATCC 700721 / MGH 78578) protein is Bifunctional glutamine synthetase adenylyltransferase/adenylyl-removing enzyme.